We begin with the raw amino-acid sequence, 114 residues long: uncharacterized protein (114 aa).

To E.coli YfiI and P.aeruginosa RluD.

This is an uncharacterized protein from Escherichia coli O6:H1 (strain CFT073 / ATCC 700928 / UPEC).